The primary structure comprises 205 residues: Protein phosphatase inhibitor 2 (205 aa).

2 disordered regions span residues 1 to 46 (MAAS…KSQK) and 64 to 205 (GLMK…SQSS). Ala-2 is subject to N-acetylalanine. Required for binding PPP1CC regions lie at residues 12 to 17 (KGILKN) and 43 to 55 (KSQKWDEMNILAT). Positions 17 to 26 (NKTSSTSSRV) are enriched in polar residues. The segment covering 35–46 (SVDEELSKKSQK) has biased composition (basic and acidic residues). Position 44 is a phosphoserine; by ATM (Ser-44). Thr-73 carries the post-translational modification Phosphothreonine; by GSK3. A compositionally biased stretch (acidic residues) spans 80–91 (GDDDDAYSDTET). A Phosphoserine modification is found at Ser-87. 3 positions are modified to phosphothreonine: Thr-89, Thr-92, and Thr-96. Residues 110-120 (SEPKYRIREQE) are compositionally biased toward basic and acidic residues. A phosphoserine mark is found at Ser-121, Ser-122, Ser-127, and Ser-130. Over residues 121-130 (SSGEEDSDLS) the composition is skewed to acidic residues. Positions 131 to 143 (PEEREKKRQFEMK) are enriched in basic and acidic residues. The tract at residues 147 to 150 (HYNE) is required for binding PPP1CC catalytic center, displacing metal ions and inhibition of PPP1CC catalytic activity. The segment covering 167 to 179 (DDEEDEEMSETAD) has biased composition (acidic residues). The segment covering 182 to 205 (SMNTEESNQGSTPSDQRQNKSQSS) has biased composition (polar residues).

This sequence belongs to the protein phosphatase inhibitor 2 family. Heterodimer with PP1. In terms of processing, phosphorylation on Ser-44 by ATM activates PP1 by dissociating the PP1-PPP1R2 complex. Phosphorylation on Thr-73 by GSK3 activates PP1 by dissociating the PP1-PPP1R2 complex.

In terms of biological role, inhibitor of protein-phosphatase 1. The polypeptide is Protein phosphatase inhibitor 2 (PPP1R2) (Oryctolagus cuniculus (Rabbit)).